A 352-amino-acid chain; its full sequence is DNA polymerase IV (352 aa).

One can recognise a UmuC domain in the interval 4–185 (IIHVDMDCFF…LPLSKIPGVG (182 aa)). Mg(2+)-binding residues include D8 and D103. The active site involves E104.

The protein belongs to the DNA polymerase type-Y family. As to quaternary structure, monomer. Mg(2+) serves as cofactor.

It is found in the cytoplasm. The enzyme catalyses DNA(n) + a 2'-deoxyribonucleoside 5'-triphosphate = DNA(n+1) + diphosphate. Functionally, poorly processive, error-prone DNA polymerase involved in untargeted mutagenesis. Copies undamaged DNA at stalled replication forks, which arise in vivo from mismatched or misaligned primer ends. These misaligned primers can be extended by PolIV. Exhibits no 3'-5' exonuclease (proofreading) activity. May be involved in translesional synthesis, in conjunction with the beta clamp from PolIII. The sequence is that of DNA polymerase IV from Yersinia pestis bv. Antiqua (strain Antiqua).